We begin with the raw amino-acid sequence, 96 residues long: Large ribosomal subunit protein uL23 (96 aa).

Belongs to the universal ribosomal protein uL23 family. As to quaternary structure, part of the 50S ribosomal subunit. Contacts protein L29, and trigger factor when it is bound to the ribosome.

Its function is as follows. One of the early assembly proteins it binds 23S rRNA. One of the proteins that surrounds the polypeptide exit tunnel on the outside of the ribosome. Forms the main docking site for trigger factor binding to the ribosome. The polypeptide is Large ribosomal subunit protein uL23 (Desulfovibrio desulfuricans (strain ATCC 27774 / DSM 6949 / MB)).